Here is a 139-residue protein sequence, read N- to C-terminus: Non-structural protein 1 (139 aa).

The DLNP; interaction with MAP1B motif lies at Asp136–Ser139.

Belongs to the pneumovirus non-structural protein 1 family. Monomer. Homomultimer. Heteromultimer with NS2. Interacts with the matrix protein M. Interacts with host ELOC and CUL2; this interaction allows NS1 to form an active E3 ligase with ELOC and CUL2. Interacts with host IRF3; this interaction leads to the disrupted association of IRF3 with CREBBP and thus reduced binding of IRF3 to the IFN-beta promoter. Interacts with host MAVS; this interaction prevents MAVS binding to RIGI and inhibits signaling pathway leading to interferon production. Interacts with host MAP1B/microtubule-associated protein 1B. Interacts with host TRIM25 (via SPRY domain); this interaction suppresses RIGI ubiquitination and results in decreased interaction between RIGI and MAVS.

Its subcellular location is the host cytoplasm. It localises to the host mitochondrion. It is found in the host nucleus. Its function is as follows. Plays a major role in antagonizing the type I IFN-mediated antiviral response by degrading or inhibiting multiple cellular factors required for either IFN induction or response pathways. Acts cooperatively with NS2 to repress activation and nuclear translocation of host IFN-regulatory factor IRF3. Also disrupts the association of IRF3 with CREBBP. Interacts with host mitochondrial-associated membrane (MAM) MAVS and prevents the interaction with RIGI. Interacts with TRIM25 to suppress TRIM25-mediated RIGI ubiquitination and thereby RIGI-MAVS interaction. Together with NS2, participates in the proteasomal degradation of host STAT2, IRF3, IRF7, TBK1 and RIGI through a NS-degradasome involving CUL2 and Elongin-C. The degradasome requires an intact mitochondrial MAVS. Decreases the levels of host TRAF3 and IKBKE/IKK-epsilon. As functions other than disruptions of the type I IFN-mediated antiviral signaling pathways, induces host SOCS1 and SOCS3 expression. Suppresses premature apoptosis by an NF-kappa-B-dependent, interferon-independent mechanism and thus facilitates virus growth. Additionally, NS1 may serve some inhibitory role in viral transcription and RNA replication. Suppresses proliferation and activation of host CD103+ CD8+ cytotoxic T-lymphocytes and Th17 helper T-lymphocytes. This chain is Non-structural protein 1 (1C), found in Homo sapiens (Human).